The following is a 256-amino-acid chain: Transmembrane protein 187 (256 aa).

7 consecutive transmembrane segments (helical) span residues 8 to 28 (ALFHVALASCLCVATVHTGIF), 51 to 71 (FLAMPFNSLVNMAYVFLGVYW), 94 to 112 (VFAGMALVYGPVQWLRIGM), 119 to 139 (VLDQWLTLPIFAWPVAWCLCL), 146 to 168 (WLFLAVEGLSLCSYSLALLHPHG), 193 to 213 (NISSGTYLALGVLSCLGFVVL), and 233 to 253 (FWSKVCDVLQFHFAFLFLTSL).

Its subcellular location is the membrane. The polypeptide is Transmembrane protein 187 (TMEM187) (Bos taurus (Bovine)).